Here is a 520-residue protein sequence, read N- to C-terminus: Cytochrome P450 monooxygenase 98 (520 aa).

The helical transmembrane segment at 7–27 (MLNNNLLIVIGTFAVCVYIVL) threads the bilayer. Residue Cys445 participates in heme binding.

Belongs to the cytochrome P450 family. Heme is required as a cofactor.

Its subcellular location is the membrane. It participates in secondary metabolite biosynthesis. Cytochrome P450 monooxygenase that is able to use pyrene, phenanthrene, 3,5-dimethoxy-trans-stilbene and 3,5,4'-trimethoxy-trans-stilbene as substrates for oxidation. In Postia placenta (strain ATCC 44394 / Madison 698-R) (Brown rot fungus), this protein is Cytochrome P450 monooxygenase 98.